The primary structure comprises 467 residues: Cilia- and flagella-associated protein 97 (467 aa).

Disordered regions lie at residues 1 to 20 (MDRYGNLSDDGEVDHSFFDS), 76 to 235 (IAKP…DISP), 336 to 370 (RQAAKPRSKSLTPKKPMSAPTRLYHSAINRQKEQQ), and 412 to 467 (ALSP…AAWQ). A compositionally biased stretch (acidic residues) spans 124 to 135 (DNYYPDEEDSSE). Residues 162-177 (DFVSTISSSDTEYSDT) are compositionally biased toward polar residues. Residues 180 to 194 (DDGASKSSYQSSKGS) show a composition bias toward low complexity. The segment covering 198–216 (SPERKPSRSSMRELRHYAE) has biased composition (basic and acidic residues). The segment covering 223–235 (TDVTPLSTPDISP) has biased composition (polar residues). A coiled-coil region spans residues 310–387 (KKNFSFSNDE…ALLKRLESVK (78 aa)). Residues 421–439 (SVSRLSPSVSSGGFSRMSS) show a composition bias toward low complexity.

This sequence belongs to the CFAP97 family.

The polypeptide is Cilia- and flagella-associated protein 97 (Xenopus tropicalis (Western clawed frog)).